Reading from the N-terminus, the 1407-residue chain is DNA-directed RNA polymerase subunit beta' (1407 aa).

Positions 70, 72, 85, and 88 each coordinate Zn(2+). Residues aspartate 460, aspartate 462, and aspartate 464 each coordinate Mg(2+). 4 residues coordinate Zn(2+): cysteine 814, cysteine 888, cysteine 895, and cysteine 898.

It belongs to the RNA polymerase beta' chain family. As to quaternary structure, the RNAP catalytic core consists of 2 alpha, 1 beta, 1 beta' and 1 omega subunit. When a sigma factor is associated with the core the holoenzyme is formed, which can initiate transcription. Requires Mg(2+) as cofactor. Zn(2+) serves as cofactor.

The catalysed reaction is RNA(n) + a ribonucleoside 5'-triphosphate = RNA(n+1) + diphosphate. DNA-dependent RNA polymerase catalyzes the transcription of DNA into RNA using the four ribonucleoside triphosphates as substrates. The polypeptide is DNA-directed RNA polymerase subunit beta' (Pectobacterium atrosepticum (strain SCRI 1043 / ATCC BAA-672) (Erwinia carotovora subsp. atroseptica)).